Here is a 240-residue protein sequence, read N- to C-terminus: MSKAGGNKGGSRTGGRGGAGSSNLHVRVKKKAGTIKESSRRWLERHLNDPYVHKSRQDGYRSRAAYKLIEINDRYNLLKKGQKIIDLGAAPGGWSQIAARIVGSTDENPQVVGIDYLHVDPLPGVILLEMDFLDDEAPQKLMDALGDKPDLVISDMAAPTTGHRRTDHLRTVHLCEVAADFAVSVLKPGGHFLTKTFQGGTENELLALLKQKFRSVHHVKPPASRAESVELYLLARDFKG.

The segment covering 1 to 20 (MSKAGGNKGGSRTGGRGGAG) has biased composition (gly residues). A disordered region spans residues 1-33 (MSKAGGNKGGSRTGGRGGAGSSNLHVRVKKKAG). Positions 92, 94, 115, 131, and 155 each coordinate S-adenosyl-L-methionine. Lys-195 functions as the Proton acceptor in the catalytic mechanism.

Belongs to the class I-like SAM-binding methyltransferase superfamily. RNA methyltransferase RlmE family.

The protein localises to the cytoplasm. The enzyme catalyses uridine(2552) in 23S rRNA + S-adenosyl-L-methionine = 2'-O-methyluridine(2552) in 23S rRNA + S-adenosyl-L-homocysteine + H(+). Its function is as follows. Specifically methylates the uridine in position 2552 of 23S rRNA at the 2'-O position of the ribose in the fully assembled 50S ribosomal subunit. This chain is Ribosomal RNA large subunit methyltransferase E, found in Brucella abortus (strain S19).